Here is a 215-residue protein sequence, read N- to C-terminus: UPF0502 protein YceH (215 aa).

K80 is subject to N6-acetyllysine.

This sequence belongs to the UPF0502 family.

In Escherichia coli (strain K12 / MC4100 / BW2952), this protein is UPF0502 protein YceH.